The primary structure comprises 396 residues: Peroxisome proliferator-activated receptor delta (396 aa).

Residues 1–24 (MKEEIPPRSPILDEQPSTPLEHQE) form a disordered region. The span at 15–24 (QPSTPLEHQE) shows a compositional bias: polar residues. The segment at residues 28–102 (SVDCKICGDR…LGMSHNAIRF (75 aa)) is a DNA-binding region (nuclear receptor). NR C4-type zinc fingers lie at residues 31–51 (CKICGDRASGFHYGVHACEGC) and 68–90 (CDRNCKIQKKNRNKCQYCRFNKC). Residues 166-394 (FVIHDMDTLW…HPLLQEIYRD (229 aa)) form the NR LBD domain.

This sequence belongs to the nuclear hormone receptor family. NR1 subfamily. In terms of assembly, heterodimer with the retinoid X receptor. In terms of processing, 'Lys-48'-linked polyubiquitinated; leading to proteasomal degradation. Deubiquitinated and stabilized by OTUD3. As to expression, ubiquitous.

The protein localises to the nucleus. In terms of biological role, ligand-activated transcription factor key mediator of energy metabolism in adipose tissues. Receptor that binds peroxisome proliferators such as hypolipidemic drugs and fatty acids. Has a preference for poly-unsaturated fatty acids, such as gamma-linoleic acid and eicosapentanoic acid. Once activated by a ligand, the receptor binds to promoter elements of target genes. Regulates the peroxisomal beta-oxidation pathway of fatty acids. Functions as a transcription activator for the acyl-CoA oxidase gene. Decreases expression of NPC1L1 once activated by a ligand. This chain is Peroxisome proliferator-activated receptor delta (ppard), found in Xenopus laevis (African clawed frog).